A 168-amino-acid chain; its full sequence is Crossover junction endodeoxyribonuclease RuvC (168 aa).

Residues D9, E70, and D145 contribute to the active site. Residues D9, E70, and D145 each contribute to the Mg(2+) site.

This sequence belongs to the RuvC family. As to quaternary structure, homodimer which binds Holliday junction (HJ) DNA. The HJ becomes 2-fold symmetrical on binding to RuvC with unstacked arms; it has a different conformation from HJ DNA in complex with RuvA. In the full resolvosome a probable DNA-RuvA(4)-RuvB(12)-RuvC(2) complex forms which resolves the HJ. Requires Mg(2+) as cofactor.

It localises to the cytoplasm. The catalysed reaction is Endonucleolytic cleavage at a junction such as a reciprocal single-stranded crossover between two homologous DNA duplexes (Holliday junction).. Its function is as follows. The RuvA-RuvB-RuvC complex processes Holliday junction (HJ) DNA during genetic recombination and DNA repair. Endonuclease that resolves HJ intermediates. Cleaves cruciform DNA by making single-stranded nicks across the HJ at symmetrical positions within the homologous arms, yielding a 5'-phosphate and a 3'-hydroxyl group; requires a central core of homology in the junction. The consensus cleavage sequence is 5'-(A/T)TT(C/G)-3'. Cleavage occurs on the 3'-side of the TT dinucleotide at the point of strand exchange. HJ branch migration catalyzed by RuvA-RuvB allows RuvC to scan DNA until it finds its consensus sequence, where it cleaves and resolves the cruciform DNA. In Chlamydia caviae (strain ATCC VR-813 / DSM 19441 / 03DC25 / GPIC) (Chlamydophila caviae), this protein is Crossover junction endodeoxyribonuclease RuvC.